We begin with the raw amino-acid sequence, 201 residues long: Small ribosomal subunit protein uS4c (201 aa).

Residues 15 to 45 (LGDLPGLSRKAIKRSYPPGEHGQKSRKPSEY) are disordered. Over residues 35–45 (HGQKSRKPSEY) the composition is skewed to basic and acidic residues. The region spanning 90–153 (MRLDNTVFRL…ASRKLVENYL (64 aa)) is the S4 RNA-binding domain.

Belongs to the universal ribosomal protein uS4 family. As to quaternary structure, part of the 30S ribosomal subunit. Contacts protein S5. The interaction surface between S4 and S5 is involved in control of translational fidelity.

It is found in the plastid. It localises to the chloroplast. Functionally, one of the primary rRNA binding proteins, it binds directly to 16S rRNA where it nucleates assembly of the body of the 30S subunit. With S5 and S12 plays an important role in translational accuracy. This Pyropia yezoensis (Susabi-nori) protein is Small ribosomal subunit protein uS4c (rps4).